Reading from the N-terminus, the 199-residue chain is Dephospho-CoA kinase (199 aa).

Residues 3–199 (VLGLTGSIGM…AAARMPRRRP (197 aa)) form the DPCK domain. 11–16 (GMGKST) lines the ATP pocket.

Belongs to the CoaE family.

Its subcellular location is the cytoplasm. It catalyses the reaction 3'-dephospho-CoA + ATP = ADP + CoA + H(+). The protein operates within cofactor biosynthesis; coenzyme A biosynthesis; CoA from (R)-pantothenate: step 5/5. Catalyzes the phosphorylation of the 3'-hydroxyl group of dephosphocoenzyme A to form coenzyme A. The chain is Dephospho-CoA kinase from Rhodopseudomonas palustris (strain HaA2).